The following is a 474-amino-acid chain: tRNA-2-methylthio-N(6)-dimethylallyladenosine synthase (474 aa).

The region spanning 3–120 is the MTTase N-terminal domain; sequence KKLHIKTWGC…LPEMINSVRG (118 aa). Residues Cys12, Cys49, Cys83, Cys157, Cys161, and Cys164 each coordinate [4Fe-4S] cluster. The Radical SAM core domain maps to 143 to 375; that stretch reads RAEGPTAFVS…QERINQQAMA (233 aa). Residues 378 to 441 enclose the TRAM domain; it reads RRMLGTTQRI…PNSLRGKVVR (64 aa).

Belongs to the methylthiotransferase family. MiaB subfamily. Monomer. [4Fe-4S] cluster is required as a cofactor.

Its subcellular location is the cytoplasm. It catalyses the reaction N(6)-dimethylallyladenosine(37) in tRNA + (sulfur carrier)-SH + AH2 + 2 S-adenosyl-L-methionine = 2-methylsulfanyl-N(6)-dimethylallyladenosine(37) in tRNA + (sulfur carrier)-H + 5'-deoxyadenosine + L-methionine + A + S-adenosyl-L-homocysteine + 2 H(+). In terms of biological role, catalyzes the methylthiolation of N6-(dimethylallyl)adenosine (i(6)A), leading to the formation of 2-methylthio-N6-(dimethylallyl)adenosine (ms(2)i(6)A) at position 37 in tRNAs that read codons beginning with uridine. In Salmonella paratyphi A (strain ATCC 9150 / SARB42), this protein is tRNA-2-methylthio-N(6)-dimethylallyladenosine synthase.